The chain runs to 390 residues: Transcription factor bHLH76 (390 aa).

The segment at 147–217 (NVSEDSQSSG…SEKQPSDSLK (71 aa)) is disordered. Residues 207–217 (NSEKQPSDSLK) are compositionally biased toward basic and acidic residues. A bHLH domain is found at 229–279 (QATNSHSLAERVRREKISERMKFLQDLVPGCDKVTGKAVMLDEIINYVQSL).

As to quaternary structure, homodimer. Interacts with IBH1. Binds reversibly to CRY2 after blue light illumination. As to expression, expressed constitutively in roots, leaves, stems, and flowers.

The protein resides in the nucleus. In terms of biological role, transcriptional activator involved in cell elongation. Regulates the expression of a subset of genes involved in cell expansion by binding to the G-box motif. Binds to chromatin DNA of the FT gene and promotes its expression, and thus triggers flowering in response to blue light. In Arabidopsis thaliana (Mouse-ear cress), this protein is Transcription factor bHLH76 (BHLH76).